The chain runs to 130 residues: Small ribosomal subunit protein uS9 (130 aa).

The protein belongs to the universal ribosomal protein uS9 family.

The protein is Small ribosomal subunit protein uS9 of Bacillus mycoides (strain KBAB4) (Bacillus weihenstephanensis).